Consider the following 92-residue polypeptide: Larval cuticle protein 9 (92 aa).

The signal sequence occupies residues 1-16; sequence MKFVIVLACLLAVVFA. The Chitin-binding type R&amp;R domain occupies 31–92; it reads LLDFNYAYEL…TGYHPKVVEA (62 aa).

Its function is as follows. Component of the cuticle of the larva. This chain is Larval cuticle protein 9 (Lcp9), found in Drosophila melanogaster (Fruit fly).